A 449-amino-acid chain; its full sequence is Methylenetetrahydrofolate--tRNA-(uracil-5-)-methyltransferase TrmFO (449 aa).

9 to 14 (GGGIAG) provides a ligand contact to FAD.

This sequence belongs to the MnmG family. TrmFO subfamily. It depends on FAD as a cofactor.

Its subcellular location is the cytoplasm. It carries out the reaction uridine(54) in tRNA + (6R)-5,10-methylene-5,6,7,8-tetrahydrofolate + NADH + H(+) = 5-methyluridine(54) in tRNA + (6S)-5,6,7,8-tetrahydrofolate + NAD(+). The catalysed reaction is uridine(54) in tRNA + (6R)-5,10-methylene-5,6,7,8-tetrahydrofolate + NADPH + H(+) = 5-methyluridine(54) in tRNA + (6S)-5,6,7,8-tetrahydrofolate + NADP(+). Its function is as follows. Catalyzes the folate-dependent formation of 5-methyl-uridine at position 54 (M-5-U54) in all tRNAs. In Gloeobacter violaceus (strain ATCC 29082 / PCC 7421), this protein is Methylenetetrahydrofolate--tRNA-(uracil-5-)-methyltransferase TrmFO.